The primary structure comprises 1259 residues: Protein retinal degeneration B (1259 aa).

The segment at 268–378 is disordered; the sequence is GGGEECSDDS…SKGALHSPVG (111 aa). S274 and S277 each carry phosphoserine. Residues 284–293 are compositionally biased toward low complexity; the sequence is STAATAASTT. The span at 318 to 335 shows a compositional bias: acidic residues; the sequence is SSDEEGEEEEDDDEDEND. The segment covering 347–363 has biased composition (low complexity); the sequence is QGGSAQRSRSQSIQMAQ. Residues S401, S403, and S434 each carry the phosphoserine modification. Disordered stretches follow at residues 427–454, 472–500, and 660–692; these read LLGEGDDSPPPHGGPSSAASVGGRGNSR, RGNKRQLRSSASVDRSHDSSPPGSPSTPS, and SQPGTASGASNSGGDAATNINTHNPLSPRNSRL. Residues 663–678 are compositionally biased toward low complexity; that stretch reads GTASGASNSGGDAATN. Residues 679–689 are compositionally biased toward polar residues; the sequence is INTHNPLSPRN. The 184-residue stretch at 730–913 folds into the DDHD domain; it reads LDFEVCDFFM…IAFILRQIGK (184 aa).

The protein belongs to the PtdIns transfer protein family. PI transfer class IIA subfamily. In terms of tissue distribution, expressed in adult heads, not detected in bodies.

It catalyses the reaction a 1,2-diacyl-sn-glycero-3-phospho-(1D-myo-inositol)(in) = a 1,2-diacyl-sn-glycero-3-phospho-(1D-myo-inositol)(out). The enzyme catalyses a 1,2-diacyl-sn-glycero-3-phosphate(in) = a 1,2-diacyl-sn-glycero-3-phosphate(out). Functionally, catalyzes the transfer of phosphatidylinositol (PI) and phosphatidic acid (PA) between membranes. May control phosphatidylinositol concentration in transport vesicles from the subrhabdomeric cisternae (SRC) to the rhabdomere. May function as a calcium transporter. This is Protein retinal degeneration B (rdgB) from Drosophila melanogaster (Fruit fly).